The chain runs to 525 residues: MSASEGMKFQFHSGEKVLCFEPDPTKARVLYDAKIIDVIIGKDEKGRKIPEYLIHFNGWNRSWDRWAAEEHVLHDTDENRRLQRKLAKKAIARLRGTGKKKRRCRLPGVDSVLKSVPVKEKSKNDENSVSSTCHESCGEKNGGIKEHRQRRIKVKAKAKKKVLSLRSRKEMDERTITIDIPDVLKKQLEDDCYYINRRKRLVKLPCQTNIITILESYVKHFAINAAFSANERPRHHHAMMHTHMNVHYVPAEKNVDLCKEMVDGLRITFDYTLPLVLLYPYEQTQYKRVTSSKFFLPIKESTTTTNRSQEELSPSPPLLNPSTPQSTESQPPTGEPATPKRRKAEPEALQSLRRSTRHSTNCDRLSESSSSPQPKRRQQDTSASMPKLFLHLEKKTPVHSRSSSPIPLTPSKDGSAVFAGFEGRRPNEINEVLSWKLVPDNYPPGDQPPPPSYIYGAQHLLRLFVKLPEILGKMSFSEKNLKALLKHFDLFLRFLAEYHDDFFPESAYVAACEAHYSTKNPRAIY.

A Tudor-knot domain is found at 13-72 (SGEKVLCFEPDPTKARVLYDAKIIDVIIGKDEKGRKIPEYLIHFNGWNRSWDRWAAEEHV). Disordered regions lie at residues 119-148 (KEKS…KEHR) and 302-383 (TTTT…DTSA). Residues 136–146 (SCGEKNGGIKE) show a composition bias toward basic and acidic residues. The MRG domain maps to 172–521 (DERTITIDIP…CEAHYSTKNP (350 aa)). The tract at residues 294 to 444 (FFLPIKESTT…WKLVPDNYPP (151 aa)) is required for the histone acetyltransferase activity of the MSL complex. Phosphoserine is present on residues S313 and S315. The span at 320-332 (NPSTPQSTESQPP) shows a compositional bias: low complexity. A phosphoserine mark is found at S371 and S404. T409 bears the Phosphothreonine mark. 2 positions are modified to phosphoserine: S411 and S415.

In terms of assembly, component of the MSL histone acetyltransferase complex at least composed of the KAT8/MOF, MSL1/hampin, MSL2 and MSL3. Interacts (via the MRG domain) with MSL1 and KAT8/MOF. In terms of tissue distribution, in testis, expression is mostly restricted to the spermatocyte stage and only in a small portion of spermatogonia.

It is found in the nucleus. Non-catalytic component of the MSL histone acetyltransferase complex, a multiprotein complex that mediates the majority of histone H4 acetylation at 'Lys-16' (H4K16ac), an epigenetic mark that prevents chromatin compaction. The MSL complex is required for chromosome stability and genome integrity by maintaining homeostatic levels of H4K16ac. The MSL complex is also involved in gene dosage by promoting up-regulation of genes expressed by the X chromosome. X up-regulation is required to compensate for autosomal biallelic expression. The MSL complex also participates in gene dosage compensation by promoting expression of Tsix non-coding RNA. Acts as a histone reader that specifically recognizes and binds histone H4 monomethylated at 'Lys-20' (H4K20Me1) in a DNA-dependent manner and is proposed to be involved in chromosomal targeting of the MSL complex. May play a role X inactivation in females. The polypeptide is MSL complex subunit 3 (Mus musculus (Mouse)).